The sequence spans 173 residues: NADH-ubiquinone oxidoreductase chain 6 (173 aa).

Transmembrane regions (helical) follow at residues 24 to 44 (AMGL…GMFV), 47 to 67 (FWFS…LFIY), 81 to 101 (MKLF…SFFF), and 142 to 162 (LITL…VKIT).

It belongs to the complex I subunit 6 family.

It localises to the mitochondrion membrane. The catalysed reaction is a ubiquinone + NADH + 5 H(+)(in) = a ubiquinol + NAD(+) + 4 H(+)(out). In terms of biological role, core subunit of the mitochondrial membrane respiratory chain NADH dehydrogenase (Complex I) that is believed to belong to the minimal assembly required for catalysis. Complex I functions in the transfer of electrons from NADH to the respiratory chain. The immediate electron acceptor for the enzyme is believed to be ubiquinone. The sequence is that of NADH-ubiquinone oxidoreductase chain 6 from Aedes aegypti (Yellowfever mosquito).